Consider the following 143-residue polypeptide: Endoribonuclease YbeY (143 aa).

Zn(2+) is bound by residues His113, His117, and Asp123.

Belongs to the endoribonuclease YbeY family. It depends on Zn(2+) as a cofactor.

The protein resides in the cytoplasm. Its function is as follows. Single strand-specific metallo-endoribonuclease involved in late-stage 70S ribosome quality control and in maturation of the 3' terminus of the 16S rRNA. In Elusimicrobium minutum (strain Pei191), this protein is Endoribonuclease YbeY.